Consider the following 575-residue polypeptide: Epsin-1 (575 aa).

The a 1,2-diacyl-sn-glycero-3-phospho-(1D-myo-inositol-4,5-bisphosphate) site is built by K11, R25, N30, R63, and H73. Residues 12 to 144 (NIVHNYSEAE…RDEDRLREER (133 aa)) enclose the ENTH domain. Positions 150–186 (TKEKLAQTATASSAAVGSGPPPEAEQAWPQSSGEEEL) are disordered. The segment covering 157–167 (TATASSAAVGS) has biased composition (low complexity). 3 UIM domains span residues 183–202 (EEELQLQLALAMSKEEADQP), 208–227 (EDDVQLQLALSLSREEHDKE), and 233–252 (GDDLRLQMAIEESKRETGGK). Residues 264–575 (FTTPAPPQAS…PAPNTNPFLL (312 aa)) are disordered. 8 consecutive repeat copies span residues 274–276 (DPW), 294–296 (DPW), 306–308 (DPW), 319–321 (DPW), 332–334 (DPW), 349–351 (DPW), 367–369 (DPW), and 377–379 (DPW). The interval 274-379 (DPWGGPASVP…APAPAFSDPW (106 aa)) is 8 X 3 AA repeats of D-P-W. 2 stretches are compositionally biased toward low complexity: residues 279–299 (PASVPTAVPVAAAASDPWGGP) and 306–316 (DPWGGAAPTPA). Residues 332–346 (DPWGGTPAPAAGEGP) show a composition bias toward low complexity. Residues 367–379 (DPWAPAPAFSDPW) are compositionally biased toward low complexity. Phosphoserine is present on S382. The [DE]-X(1,2)-F-X-X-[FL]-X-X-X-R motif signature appears at 401–410 (DEFSDFDRLR). 2 positions are modified to phosphoserine: S418 and S419. A Phosphothreonine modification is found at T420. 3 positions are modified to phosphoserine: S434, S446, and S453. The segment covering 453-467 (SPPPAATPTPTPPTR) has biased composition (pro residues). A phosphothreonine mark is found at T459, T463, and T469. A Phosphoserine modification is found at S472. T493 bears the Phosphothreonine mark. A run of 2 repeats spans residues 501 to 503 (NPF) and 517 to 519 (NPF). Residues 501–573 (NPFLPSGAPP…GPPAPNTNPF (73 aa)) form a 3 X 3 AA repeats of N-P-F region. R533 carries the omega-N-methylarginine modification. Pro residues predominate over residues 556-569 (GLPPMMPPGPPAPN). Copy 3 of the repeat occupies 571 to 573 (NPF).

This sequence belongs to the epsin family. In terms of assembly, monomer. Binds clathrin and ZBTB16/ZNF145. Binds ubiquitinated proteins. Interacts with RALBP1 in a complex also containing NUMB and TFAP2A during interphase and mitosis. Interacts with AP2B1. Interacts with UBQLN2. Interacts with ITSN1. Interacts with AP2A1 and AP2A2. Interacts with REPS2; the interaction is direct. Interacts with EPS15; the interaction is direct. Interacts with ENTREP1. Post-translationally, phosphorylated on serine and/or threonine residues in mitotic cells. Phosphorylation reduces interaction with REPS2, AP-2 and the membrane fraction. Depolarization of synaptosomes results in dephosphorylation. In terms of processing, ubiquitinated.

The protein resides in the cytoplasm. The protein localises to the cell membrane. Its subcellular location is the nucleus. It is found in the membrane. It localises to the clathrin-coated pit. Functionally, binds to membranes enriched in phosphatidylinositol 4,5-bisphosphate (PtdIns(4,5)P2). Modifies membrane curvature and facilitates the formation of clathrin-coated invaginations. Regulates receptor-mediated endocytosis. The chain is Epsin-1 (Epn1) from Mus musculus (Mouse).